Consider the following 361-residue polypeptide: MSKRAFNFCAGPAALPEAVLQRAQAELLDWQGRGLSVMEMSHRSDAYVAIAEKAEQDLRDLMAIPSDYKVLFLQGGASQQFAEIPLNLLPEGGVADYVDTGIWSRKSIEEARRFGNVNLAASAKPYDYFAISGQNDWQLSDNAAYLHYASNETIGGLQFDWVPELGDTPLVVDMSSDILSRAIDVSKFGLIYAGAQKNIGPSGLVVVIVRDDLLGKARSSCPTMLDYKIAADNGSMYNTPATFSWYLSGLVFEWLKEQGGVEVMEQRNRAKKELLYGFIDASEFYTNPIAENARSWMNVPFRLADERLDKAFLAGADARGLLNLKGHRSVGGMRASIYNAVGLDAVEALVAYMAEFEKEHG.

Arg43 is a binding site for L-glutamate. Pyridoxal 5'-phosphate-binding positions include 77–78 (AS), Trp103, Thr153, Asp173, and Gln196. The residue at position 197 (Lys197) is an N6-(pyridoxal phosphate)lysine. 238 to 239 (NT) serves as a coordination point for pyridoxal 5'-phosphate.

Belongs to the class-V pyridoxal-phosphate-dependent aminotransferase family. SerC subfamily. In terms of assembly, homodimer. Pyridoxal 5'-phosphate is required as a cofactor.

It is found in the cytoplasm. It carries out the reaction O-phospho-L-serine + 2-oxoglutarate = 3-phosphooxypyruvate + L-glutamate. The catalysed reaction is 4-(phosphooxy)-L-threonine + 2-oxoglutarate = (R)-3-hydroxy-2-oxo-4-phosphooxybutanoate + L-glutamate. It functions in the pathway amino-acid biosynthesis; L-serine biosynthesis; L-serine from 3-phospho-D-glycerate: step 2/3. It participates in cofactor biosynthesis; pyridoxine 5'-phosphate biosynthesis; pyridoxine 5'-phosphate from D-erythrose 4-phosphate: step 3/5. Its function is as follows. Catalyzes the reversible conversion of 3-phosphohydroxypyruvate to phosphoserine and of 3-hydroxy-2-oxo-4-phosphonooxybutanoate to phosphohydroxythreonine. The sequence is that of Phosphoserine aminotransferase from Stutzerimonas stutzeri (Pseudomonas stutzeri).